The following is a 209-amino-acid chain: Thymidylate kinase (209 aa).

An ATP-binding site is contributed by 10-17; the sequence is GPDGAGKT.

The protein belongs to the thymidylate kinase family.

It catalyses the reaction dTMP + ATP = dTDP + ADP. Functionally, phosphorylation of dTMP to form dTDP in both de novo and salvage pathways of dTTP synthesis. This Pediococcus pentosaceus (strain ATCC 25745 / CCUG 21536 / LMG 10740 / 183-1w) protein is Thymidylate kinase.